The sequence spans 297 residues: Ribosomal RNA small subunit methyltransferase H (297 aa).

S-adenosyl-L-methionine is bound by residues 37 to 39, D56, F87, D102, and H109; that span reads GGH.

The protein belongs to the methyltransferase superfamily. RsmH family.

The protein resides in the cytoplasm. It carries out the reaction cytidine(1402) in 16S rRNA + S-adenosyl-L-methionine = N(4)-methylcytidine(1402) in 16S rRNA + S-adenosyl-L-homocysteine + H(+). In terms of biological role, specifically methylates the N4 position of cytidine in position 1402 (C1402) of 16S rRNA. In Borrelia turicatae (strain 91E135), this protein is Ribosomal RNA small subunit methyltransferase H.